The chain runs to 369 residues: tRNA(Met) cytidine acetate ligase (369 aa).

ATP contacts are provided by residues 7–20 (VAEF…HKYL), G96, N152, and R175.

Belongs to the TmcAL family.

The protein localises to the cytoplasm. The catalysed reaction is cytidine(34) in elongator tRNA(Met) + acetate + ATP = N(4)-acetylcytidine(34) in elongator tRNA(Met) + AMP + diphosphate. Functionally, catalyzes the formation of N(4)-acetylcytidine (ac(4)C) at the wobble position of elongator tRNA(Met), using acetate and ATP as substrates. First activates an acetate ion to form acetyladenylate (Ac-AMP) and then transfers the acetyl group to tRNA to form ac(4)C34. The protein is tRNA(Met) cytidine acetate ligase of Streptococcus agalactiae serotype Ia (strain ATCC 27591 / A909 / CDC SS700).